Reading from the N-terminus, the 1318-residue chain is Putative tetratricopeptide repeat protein 41 (1318 aa).

TPR repeat units follow at residues 399–432 (TQLE…KPCI), 653–684 (WVQE…TPVE), 817–850 (CRLM…LVQS), 858–891 (LKVQ…MLRL), 991–1027 (MEFL…KENA), and 1045–1082 (SDTL…RVIH).

It is found in the cytoplasm. The chain is Putative tetratricopeptide repeat protein 41 from Homo sapiens (Human).